A 1079-amino-acid polypeptide reads, in one-letter code: Isoleucine--tRNA ligase (1079 aa).

A 'HIGH' region motif is present at residues 53–63 (PFANGLPHYGH). The 'KMSKS' region signature appears at 611 to 615 (KLSKR). ATP is bound at residue Lys-614.

This sequence belongs to the class-I aminoacyl-tRNA synthetase family. IleS type 2 subfamily. In terms of assembly, monomer. Zn(2+) serves as cofactor.

The protein resides in the cytoplasm. The catalysed reaction is tRNA(Ile) + L-isoleucine + ATP = L-isoleucyl-tRNA(Ile) + AMP + diphosphate. Functionally, catalyzes the attachment of isoleucine to tRNA(Ile). As IleRS can inadvertently accommodate and process structurally similar amino acids such as valine, to avoid such errors it has two additional distinct tRNA(Ile)-dependent editing activities. One activity is designated as 'pretransfer' editing and involves the hydrolysis of activated Val-AMP. The other activity is designated 'posttransfer' editing and involves deacylation of mischarged Val-tRNA(Ile). The chain is Isoleucine--tRNA ligase from Rickettsia canadensis (strain McKiel).